A 275-amino-acid chain; its full sequence is Phosphonoacetaldehyde hydrolase (275 aa).

Asp15 acts as the Nucleophile in catalysis. Mg(2+)-binding residues include Asp15 and Ala17. Catalysis depends on Lys56, which acts as the Schiff-base intermediate with substrate. Asp189 contacts Mg(2+).

It belongs to the HAD-like hydrolase superfamily. PhnX family. In terms of assembly, homodimer. The cofactor is Mg(2+).

The enzyme catalyses phosphonoacetaldehyde + H2O = acetaldehyde + phosphate + H(+). In terms of biological role, involved in phosphonate degradation. The chain is Phosphonoacetaldehyde hydrolase from Pseudomonas entomophila (strain L48).